Here is a 430-residue protein sequence, read N- to C-terminus: Bone morphogenetic protein 7 (430 aa).

Positions 1–29 (MHVRSLRAAAPHSFVALWAPLFLLRSALA) are cleaved as a signal peptide. A propeptide spanning residues 30 to 291 (DFSLDNEVHS…ATEVHLRSIR (262 aa)) is cleaved from the precursor. 4 N-linked (GlcNAc...) asparagine glycosylation sites follow: asparagine 186, asparagine 301, asparagine 320, and asparagine 371. A disordered region spans residues 290-310 (IRSTGGKQRSQNRSKTPKNQE). Disulfide bonds link cysteine 329–cysteine 395, cysteine 358–cysteine 427, and cysteine 362–cysteine 429.

It belongs to the TGF-beta family. Homodimer; disulfide-linked. Interacts with SOSTDC1. Interacts with TWSG1. Interacts with FBN1 (via N-terminal domain) and FBN2. Interacts with type I receptor ACVR1. Interacts with type II receptor ACVR2A. Interacts with NOG; this interaction inhibits canonical BMP signaling. Interacts with SCUBE3. Interacts with ERFE; the interaction inhibits BMP-induced transcription of HAMP. Interacts with TGFBR3.

It is found in the secreted. In terms of biological role, growth factor of the TGF-beta superfamily that plays important role in various biological processes, including embryogenesis, hematopoiesis, neurogenesis and skeletal morphogenesis. Initiates the canonical BMP signaling cascade by associating with type I receptor ACVR1 and type II receptor ACVR2A. Once all three components are bound together in a complex at the cell surface, ACVR2A phosphorylates and activates ACVR1. In turn, ACVR1 propagates signal by phosphorylating SMAD1/5/8 that travel to the nucleus and act as activators and repressors of transcription of target genes. For specific functions such as growth cone collapse in developing spinal neurons and chemotaxis of monocytes, also uses BMPR2 as type II receptor. Can also signal through non-canonical pathways such as P38 MAP kinase signaling cascade that promotes brown adipocyte differentiation through activation of target genes, including members of the SOX family of transcription factors. Promotes the expression of HAMP, this is repressed by its interaction with ERFE. This Mus musculus (Mouse) protein is Bone morphogenetic protein 7 (Bmp7).